The chain runs to 122 residues: Large ribosomal subunit protein bL12 (122 aa).

The protein belongs to the bacterial ribosomal protein bL12 family. Homodimer. Part of the ribosomal stalk of the 50S ribosomal subunit. Forms a multimeric L10(L12)X complex, where L10 forms an elongated spine to which 2 to 4 L12 dimers bind in a sequential fashion. Binds GTP-bound translation factors.

Forms part of the ribosomal stalk which helps the ribosome interact with GTP-bound translation factors. Is thus essential for accurate translation. The chain is Large ribosomal subunit protein bL12 from Cronobacter sakazakii (strain ATCC BAA-894) (Enterobacter sakazakii).